Here is a 415-residue protein sequence, read N- to C-terminus: Multidrug resistance protein MdtA (415 aa).

An N-terminal signal peptide occupies residues 1-21 (MKGSYKSRWVIVIVVVIAAIA). Disordered stretches follow at residues 32-60 (SRSAAPGATKQAQQSPASGRRGMRSGPLA) and 392-415 (EAQSATTPEEKATSREYAKKGARS). Positions 399–415 (PEEKATSREYAKKGARS) are enriched in basic and acidic residues.

This sequence belongs to the membrane fusion protein (MFP) (TC 8.A.1) family. Part of a tripartite efflux system composed of MdtA, MdtB and MdtC.

It is found in the cell inner membrane. The MdtABC tripartite complex confers resistance against novobiocin and deoxycholate. The polypeptide is Multidrug resistance protein MdtA (Escherichia coli O81 (strain ED1a)).